The primary structure comprises 338 residues: Putative clathrin assembly protein At5g10410 (338 aa).

One can recognise an ENTH domain in the interval 27 to 157 (FGSTAVKYIH…WVPKVLGSFP (131 aa)).

It localises to the membrane. It is found in the clathrin-coated pit. The protein localises to the golgi apparatus. Its subcellular location is the cytoplasmic vesicle. The protein resides in the clathrin-coated vesicle. In Arabidopsis thaliana (Mouse-ear cress), this protein is Putative clathrin assembly protein At5g10410.